Consider the following 161-residue polypeptide: Endoribonuclease YbeY (161 aa).

Positions 120, 124, and 130 each coordinate Zn(2+).

The protein belongs to the endoribonuclease YbeY family. It depends on Zn(2+) as a cofactor.

It is found in the cytoplasm. Its function is as follows. Single strand-specific metallo-endoribonuclease involved in late-stage 70S ribosome quality control and in maturation of the 3' terminus of the 16S rRNA. This Chlamydia trachomatis serovar A (strain ATCC VR-571B / DSM 19440 / HAR-13) protein is Endoribonuclease YbeY.